A 326-amino-acid polypeptide reads, in one-letter code: Ras association domain-containing protein 2 (326 aa).

Residues 111 to 133 are disordered; sequence EVDAPPEGDQMPSSTDSRGLKPL. Residues 176–264 enclose the Ras-associating domain; it reads YNHKTSVFTP…SKVFLMEKDQ (89 aa). Positions 272–319 constitute an SARAH domain; the sequence is VAQYIKFEMPVLKSFIQKLQEEEDREVKKLMRKYTVLRLMIRQRLEEI.

As to quaternary structure, interacts directly with activated KRAS in a GTP-dependent manner. Interacts (via SARAH domain) with STK3/MST2 and STK4/MST1. Post-translationally, phosphorylated by STK3/MST2 and STK4/MST1. As to expression, widely expressed with highest levels in brain, placenta, peripheral blood and lung. Frequently down-regulated in lung tumor cell lines.

It is found in the nucleus. Its subcellular location is the cytoplasm. The protein resides in the chromosome. It localises to the centromere. The protein localises to the kinetochore. Potential tumor suppressor. Acts as a KRAS-specific effector protein. May promote apoptosis and cell cycle arrest. Stabilizes STK3/MST2 by protecting it from proteasomal degradation. The sequence is that of Ras association domain-containing protein 2 (RASSF2) from Homo sapiens (Human).